The primary structure comprises 410 residues: Serine hydroxymethyltransferase (410 aa).

(6S)-5,6,7,8-tetrahydrofolate-binding positions include Leu119 and 123-125 (GHL). Lys228 is subject to N6-(pyridoxal phosphate)lysine. 351-353 (SPF) is a binding site for (6S)-5,6,7,8-tetrahydrofolate.

It belongs to the SHMT family. In terms of assembly, homodimer. It depends on pyridoxal 5'-phosphate as a cofactor.

It localises to the cytoplasm. The enzyme catalyses (6R)-5,10-methylene-5,6,7,8-tetrahydrofolate + glycine + H2O = (6S)-5,6,7,8-tetrahydrofolate + L-serine. Its pathway is one-carbon metabolism; tetrahydrofolate interconversion. It participates in amino-acid biosynthesis; glycine biosynthesis; glycine from L-serine: step 1/1. Its function is as follows. Catalyzes the reversible interconversion of serine and glycine with tetrahydrofolate (THF) serving as the one-carbon carrier. This reaction serves as the major source of one-carbon groups required for the biosynthesis of purines, thymidylate, methionine, and other important biomolecules. Also exhibits THF-independent aldolase activity toward beta-hydroxyamino acids, producing glycine and aldehydes, via a retro-aldol mechanism. This is Serine hydroxymethyltransferase from Alkaliphilus oremlandii (strain OhILAs) (Clostridium oremlandii (strain OhILAs)).